The primary structure comprises 216 residues: Ribose-5-phosphate isomerase A (216 aa).

Substrate is bound by residues 26–29 (TGST), 79–82 (DGAD), and 92–95 (KGGG). Glutamate 101 functions as the Proton acceptor in the catalytic mechanism. A substrate-binding site is contributed by lysine 119.

Belongs to the ribose 5-phosphate isomerase family. In terms of assembly, homodimer.

The catalysed reaction is aldehydo-D-ribose 5-phosphate = D-ribulose 5-phosphate. It functions in the pathway carbohydrate degradation; pentose phosphate pathway; D-ribose 5-phosphate from D-ribulose 5-phosphate (non-oxidative stage): step 1/1. Functionally, catalyzes the reversible conversion of ribose-5-phosphate to ribulose 5-phosphate. The chain is Ribose-5-phosphate isomerase A from Legionella pneumophila (strain Corby).